Reading from the N-terminus, the 358-residue chain is MASHDQEAFLTAMQIVNSSAVDGVLICLIELNVFDIMMQKAGMDGYLHPDEIALNLPTKNPQAPEMLDRMLRILASHSIIKCKLVKKMSGNALLTRAYGLTLISQYFVNAQDGPCLAPYLKLIHHKQMQNSWEKVNEAVLEGGYAFNKAHAGSTFFEYLGKDKSVAELLSQTMAKSIPTSMNILLKSYKGFEGVKEVVDVGGAYAATLSCIISFNPHVKGINFDVPHVIKNAPSLPGITHVGGDMFESVPRGEAIVLQRVLHDWTDEESVKILKKCYEAIPDHGKVVIIEMIQTEMPEDDIIAKNISEMDIRMLLYTPGGKERTVNEFLMLGKQAGFPSSKYICGADLYGVVELYKKK.

Positions 201, 224, 244, 245, and 259 each coordinate S-adenosyl-L-methionine. The Proton acceptor role is filled by His-262.

It belongs to the class I-like SAM-binding methyltransferase superfamily. Cation-independent O-methyltransferase family. COMT subfamily. As to expression, highly expressed in developing fruits. Expressed at low levels in roots, young leaves, buds and flowers.

The catalysed reaction is (E)-anol + S-adenosyl-L-methionine = (E)-anethole + S-adenosyl-L-homocysteine + H(+). The enzyme catalyses (E)-isoeugenol + S-adenosyl-L-methionine = (E)-isomethyleugenol + S-adenosyl-L-homocysteine + H(+). Its pathway is aromatic compound metabolism; phenylpropanoid biosynthesis. With respect to regulation, inhibited by zinc and copper. Its function is as follows. Phenylpropene O-methyltransferase that catalyzes the conversion of trans-anol to trans-anethole and isoeugenol to isomethyleugenol. Phenylpropenes are the primary constituents of various essential plant oils. They are produced as antimicrobial and antianimal compounds, or as floral attractants of pollinators. The protein is Trans-anol O-methyltransferase 1 (AIMT1) of Pimpinella anisum (Anise).